The following is a 77-amino-acid chain: Putative defensin-like protein 60 (77 aa).

Residues 1 to 25 form the signal peptide; it reads MKMNITKSYVILFLVVVMTNSLSNS. 4 cysteine pairs are disulfide-bonded: cysteine 41–cysteine 75, cysteine 45–cysteine 68, cysteine 54–cysteine 73, and cysteine 58–cysteine 74.

Belongs to the DEFL family.

It localises to the secreted. This Arabidopsis thaliana (Mouse-ear cress) protein is Putative defensin-like protein 60.